The primary structure comprises 476 residues: Glycogen synthase (476 aa).

Lysine 15 serves as a coordination point for ADP-alpha-D-glucose.

The protein belongs to the glycosyltransferase 1 family. Bacterial/plant glycogen synthase subfamily.

It carries out the reaction [(1-&gt;4)-alpha-D-glucosyl](n) + ADP-alpha-D-glucose = [(1-&gt;4)-alpha-D-glucosyl](n+1) + ADP + H(+). It participates in glycan biosynthesis; glycogen biosynthesis. Functionally, synthesizes alpha-1,4-glucan chains using ADP-glucose. The chain is Glycogen synthase from Bacillus anthracis.